The primary structure comprises 365 residues: tRNA N6-adenosine threonylcarbamoyltransferase (365 aa).

Residues histidine 122 and histidine 126 each contribute to the Fe cation site. Substrate is bound by residues 147-151 (LVSGG), aspartate 180, glycine 193, and asparagine 293. Fe cation is bound at residue aspartate 321. The interval 340–365 (PNEIDTAARPRWPLSERTPATPEHVS) is disordered.

It belongs to the KAE1 / TsaD family. Fe(2+) serves as cofactor.

It localises to the cytoplasm. The catalysed reaction is L-threonylcarbamoyladenylate + adenosine(37) in tRNA = N(6)-L-threonylcarbamoyladenosine(37) in tRNA + AMP + H(+). Required for the formation of a threonylcarbamoyl group on adenosine at position 37 (t(6)A37) in tRNAs that read codons beginning with adenine. Is involved in the transfer of the threonylcarbamoyl moiety of threonylcarbamoyl-AMP (TC-AMP) to the N6 group of A37, together with TsaE and TsaB. TsaD likely plays a direct catalytic role in this reaction. This Gluconobacter oxydans (strain 621H) (Gluconobacter suboxydans) protein is tRNA N6-adenosine threonylcarbamoyltransferase.